The following is a 271-amino-acid chain: Protein ABHD14A (271 aa).

Residues 35–55 (VALLGLSLLLMLLLYVGLPGP) form a helical; Signal-anchor for type II membrane protein membrane-spanning segment. A glycan (N-linked (GlcNAc...) asparagine) is linked at asparagine 67. Serine 171 functions as the Charge relay system in the catalytic mechanism. Asparagine 201 carries N-linked (GlcNAc...) asparagine glycosylation. Catalysis depends on charge relay system residues aspartate 222 and histidine 249.

It belongs to the AB hydrolase superfamily. ABHD14 family.

It localises to the cytoplasm. Its subcellular location is the membrane. Functionally, possible role in granule neuron development. The chain is Protein ABHD14A from Homo sapiens (Human).